Here is a 443-residue protein sequence, read N- to C-terminus: Protein king tubby (443 aa).

2 disordered regions span residues 57–80 and 98–191; these read TNGS…NNMR and HELE…EGDV. A compositionally biased stretch (polar residues) spans 67–80; sequence VAMNTSRNHSNNMR. Low complexity predominate over residues 113–128; sequence QQQQSASHSANSTQSQ. A Phosphoserine modification is found at Ser-136. Residues 177–186 show a composition bias toward gly residues; the sequence is NGTGNGTGGE.

The protein belongs to the TUB family.

It localises to the cytoplasm. Its subcellular location is the nucleus. The protein localises to the cell projection. It is found in the cilium membrane. The protein resides in the rhabdomere. The polypeptide is Protein king tubby (Drosophila sechellia (Fruit fly)).